Reading from the N-terminus, the 149-residue chain is D-aminoacyl-tRNA deacylase (149 aa).

Positions 137-138 (GP) match the Gly-cisPro motif, important for rejection of L-amino acids motif.

Belongs to the DTD family. In terms of assembly, homodimer.

Its subcellular location is the cytoplasm. The enzyme catalyses glycyl-tRNA(Ala) + H2O = tRNA(Ala) + glycine + H(+). The catalysed reaction is a D-aminoacyl-tRNA + H2O = a tRNA + a D-alpha-amino acid + H(+). An aminoacyl-tRNA editing enzyme that deacylates mischarged D-aminoacyl-tRNAs. Also deacylates mischarged glycyl-tRNA(Ala), protecting cells against glycine mischarging by AlaRS. Acts via tRNA-based rather than protein-based catalysis; rejects L-amino acids rather than detecting D-amino acids in the active site. By recycling D-aminoacyl-tRNA to D-amino acids and free tRNA molecules, this enzyme counteracts the toxicity associated with the formation of D-aminoacyl-tRNA entities in vivo and helps enforce protein L-homochirality. In Clostridium novyi (strain NT), this protein is D-aminoacyl-tRNA deacylase.